Here is a 443-residue protein sequence, read N- to C-terminus: Tubulin beta-1/beta-2 chain (443 aa).

GTP is bound by residues glutamine 11, glutamate 69, serine 138, glycine 142, threonine 143, glycine 144, asparagine 204, and asparagine 226. Residue glutamate 69 participates in Mg(2+) binding. Residues 424–443 (QYQDASAEEEGEFEGEEEEA) are disordered. The segment covering 429 to 443 (SAEEEGEFEGEEEEA) has biased composition (acidic residues).

This sequence belongs to the tubulin family. In terms of assembly, dimer of alpha and beta chains. A typical microtubule is a hollow water-filled tube with an outer diameter of 25 nm and an inner diameter of 15 nM. Alpha-beta heterodimers associate head-to-tail to form protofilaments running lengthwise along the microtubule wall with the beta-tubulin subunit facing the microtubule plus end conferring a structural polarity. Microtubules usually have 13 protofilaments but different protofilament numbers can be found in some organisms and specialized cells. Mg(2+) serves as cofactor.

The protein resides in the cytoplasm. Its subcellular location is the cytoskeleton. Its function is as follows. Tubulin is the major constituent of microtubules, a cylinder consisting of laterally associated linear protofilaments composed of alpha- and beta-tubulin heterodimers. Microtubules grow by the addition of GTP-tubulin dimers to the microtubule end, where a stabilizing cap forms. Below the cap, tubulin dimers are in GDP-bound state, owing to GTPase activity of alpha-tubulin. In Chlamydomonas reinhardtii (Chlamydomonas smithii), this protein is Tubulin beta-1/beta-2 chain (TUBB1).